Reading from the N-terminus, the 250-residue chain is Triosephosphate isomerase (250 aa).

The substrate site is built by N10 and K12. The active-site Electrophile is H94. The active-site Proton acceptor is the E167.

The protein belongs to the triosephosphate isomerase family. As to quaternary structure, homodimer.

The protein localises to the cytoplasm. It catalyses the reaction D-glyceraldehyde 3-phosphate = dihydroxyacetone phosphate. Its pathway is carbohydrate biosynthesis; gluconeogenesis. The protein operates within carbohydrate degradation; glycolysis; D-glyceraldehyde 3-phosphate from glycerone phosphate: step 1/1. The protein is Triosephosphate isomerase of Taenia solium (Pork tapeworm).